The sequence spans 144 residues: 3-dehydroquinate dehydratase (144 aa).

Catalysis depends on Tyr-24, which acts as the Proton acceptor. Asn-73, His-79, and Asp-86 together coordinate substrate. The Proton donor role is filled by His-99. Substrate is bound by residues 100–101 and Arg-110; that span reads LS.

It belongs to the type-II 3-dehydroquinase family. As to quaternary structure, homododecamer.

It catalyses the reaction 3-dehydroquinate = 3-dehydroshikimate + H2O. The protein operates within metabolic intermediate biosynthesis; chorismate biosynthesis; chorismate from D-erythrose 4-phosphate and phosphoenolpyruvate: step 3/7. Functionally, catalyzes a trans-dehydration via an enolate intermediate. The chain is 3-dehydroquinate dehydratase from Shewanella sp. (strain MR-4).